Reading from the N-terminus, the 150-residue chain is SsrA-binding protein (150 aa).

It belongs to the SmpB family.

It is found in the cytoplasm. Required for rescue of stalled ribosomes mediated by trans-translation. Binds to transfer-messenger RNA (tmRNA), required for stable association of tmRNA with ribosomes. tmRNA and SmpB together mimic tRNA shape, replacing the anticodon stem-loop with SmpB. tmRNA is encoded by the ssrA gene; the 2 termini fold to resemble tRNA(Ala) and it encodes a 'tag peptide', a short internal open reading frame. During trans-translation Ala-aminoacylated tmRNA acts like a tRNA, entering the A-site of stalled ribosomes, displacing the stalled mRNA. The ribosome then switches to translate the ORF on the tmRNA; the nascent peptide is terminated with the 'tag peptide' encoded by the tmRNA and targeted for degradation. The ribosome is freed to recommence translation, which seems to be the essential function of trans-translation. This Polynucleobacter asymbioticus (strain DSM 18221 / CIP 109841 / QLW-P1DMWA-1) (Polynucleobacter necessarius subsp. asymbioticus) protein is SsrA-binding protein.